The sequence spans 25 residues: GHKLGEFAPTRTFRGHKKEDKKVKR.

Positions 1–25 are disordered; sequence GHKLGEFAPTRTFRGHKKEDKKVKR.

The protein belongs to the universal ribosomal protein uS19 family.

Protein S19 forms a complex with S13 that binds strongly to the 16S ribosomal RNA. This chain is Small ribosomal subunit protein uS19 (rpsS), found in Acholeplasma laidlawii.